The primary structure comprises 193 residues: Phosphoheptose isomerase (193 aa).

In terms of domain architecture, SIS spans 37-193 (LADSFKAGGK…QLIEKEMVKA (157 aa)). 52–54 (NGG) serves as a coordination point for substrate. Residues histidine 61 and glutamate 65 each coordinate Zn(2+). Substrate-binding positions include glutamate 65, 93–94 (ND), 119–121 (STS), serine 124, and glutamine 172. Glutamine 172 and histidine 180 together coordinate Zn(2+).

It belongs to the SIS family. GmhA subfamily. As to quaternary structure, homotetramer. Zn(2+) is required as a cofactor.

It is found in the cytoplasm. It catalyses the reaction 2 D-sedoheptulose 7-phosphate = D-glycero-alpha-D-manno-heptose 7-phosphate + D-glycero-beta-D-manno-heptose 7-phosphate. It participates in carbohydrate biosynthesis; D-glycero-D-manno-heptose 7-phosphate biosynthesis; D-glycero-alpha-D-manno-heptose 7-phosphate and D-glycero-beta-D-manno-heptose 7-phosphate from sedoheptulose 7-phosphate: step 1/1. Its function is as follows. Catalyzes the isomerization of sedoheptulose 7-phosphate in D-glycero-D-manno-heptose 7-phosphate. This is Phosphoheptose isomerase from Yersinia pseudotuberculosis serotype O:1b (strain IP 31758).